Here is a 253-residue protein sequence, read N- to C-terminus: Rab GTPase-activating protein 1-like, isoform 10 (253 aa).

A coiled-coil region spans residues 8–222 (SMTFEERENR…MNEIQAAKNS (215 aa)). The interval 233-253 (TATGTQPLQPAPVTQPPKEST) is disordered.

This is Rab GTPase-activating protein 1-like, isoform 10 (RABGAP1L) from Homo sapiens (Human).